The sequence spans 387 residues: Succinate--CoA ligase [ADP-forming] subunit beta (387 aa).

ATP-binding positions include Lys46, 53–55, Glu99, Ala102, and Glu107; that span reads GRG. Positions 199 and 213 each coordinate Mg(2+). Residues Asn264 and 321–323 each bind substrate; that span reads GIV.

Belongs to the succinate/malate CoA ligase beta subunit family. Heterotetramer of two alpha and two beta subunits. The cofactor is Mg(2+).

It carries out the reaction succinate + ATP + CoA = succinyl-CoA + ADP + phosphate. The enzyme catalyses GTP + succinate + CoA = succinyl-CoA + GDP + phosphate. Its pathway is carbohydrate metabolism; tricarboxylic acid cycle; succinate from succinyl-CoA (ligase route): step 1/1. In terms of biological role, succinyl-CoA synthetase functions in the citric acid cycle (TCA), coupling the hydrolysis of succinyl-CoA to the synthesis of either ATP or GTP and thus represents the only step of substrate-level phosphorylation in the TCA. The beta subunit provides nucleotide specificity of the enzyme and binds the substrate succinate, while the binding sites for coenzyme A and phosphate are found in the alpha subunit. This chain is Succinate--CoA ligase [ADP-forming] subunit beta, found in Campylobacter jejuni subsp. jejuni serotype O:23/36 (strain 81-176).